The chain runs to 255 residues: Hydroxyacylglutathione hydrolase (255 aa).

Zn(2+) is bound by residues histidine 56, histidine 58, aspartate 60, histidine 61, histidine 114, aspartate 133, and histidine 171.

This sequence belongs to the metallo-beta-lactamase superfamily. Glyoxalase II family. As to quaternary structure, monomer. Zn(2+) serves as cofactor.

The enzyme catalyses an S-(2-hydroxyacyl)glutathione + H2O = a 2-hydroxy carboxylate + glutathione + H(+). It participates in secondary metabolite metabolism; methylglyoxal degradation; (R)-lactate from methylglyoxal: step 2/2. In terms of biological role, thiolesterase that catalyzes the hydrolysis of S-D-lactoyl-glutathione to form glutathione and D-lactic acid. The chain is Hydroxyacylglutathione hydrolase from Roseobacter denitrificans (strain ATCC 33942 / OCh 114) (Erythrobacter sp. (strain OCh 114)).